The sequence spans 421 residues: Medium-chain specific acyl-CoA dehydrogenase, mitochondrial (421 aa).

The transit peptide at 1–25 directs the protein to the mitochondrion; it reads MAAMFRRSCRVLRSLSHFGWRSQHT. K79 carries the N6-acetyllysine modification. Residue 158–167 participates in FAD binding; sequence YCVTEPGAGS. S167 contributes to the octanoyl-CoA binding site. At K179 the chain carries N6-succinyllysine. 191 to 193 contributes to the FAD binding site; sequence WIT. K212 carries the N6-acetyllysine; alternate modification. K212 is subject to N6-succinyllysine; alternate. An octanoyl-CoA-binding site is contributed by S216. K217, K259, and K271 each carry N6-acetyllysine; alternate. N6-succinyllysine; alternate is present on residues K217, K259, and K271. Residue D278 coordinates octanoyl-CoA. N6-acetyllysine is present on K279. R281 contributes to the octanoyl-CoA binding site. K301 is modified (N6-acetyllysine). FAD is bound by residues 306 to 308 and 316 to 317; these read RKT and HQ. R349 and T351 together coordinate octanoyl-CoA. T351 is subject to Phosphothreonine. Position 374 to 378 (374 to 378) interacts with FAD; sequence QVFGG. Residue E401 participates in octanoyl-CoA binding. Residue E401 is the Proton acceptor of the active site. Position 402–405 (402–405) interacts with FAD; it reads GTAQ.

It belongs to the acyl-CoA dehydrogenase family. As to quaternary structure, homotetramer. Interacts with the heterodimeric electron transfer flavoprotein ETF. The cofactor is FAD. Post-translationally, acetylated. Could occur at proximity of the cofactor-binding sites and reduce the catalytic activity. Could be deacetylated by SIRT3.

It is found in the mitochondrion matrix. It carries out the reaction a medium-chain 2,3-saturated fatty acyl-CoA + oxidized [electron-transfer flavoprotein] + H(+) = a medium-chain (2E)-enoyl-CoA + reduced [electron-transfer flavoprotein]. It catalyses the reaction pentanoyl-CoA + oxidized [electron-transfer flavoprotein] + H(+) = (2E)-pentenoyl-CoA + reduced [electron-transfer flavoprotein]. The enzyme catalyses hexanoyl-CoA + oxidized [electron-transfer flavoprotein] + H(+) = (2E)-hexenoyl-CoA + reduced [electron-transfer flavoprotein]. The catalysed reaction is octanoyl-CoA + oxidized [electron-transfer flavoprotein] + H(+) = (2E)-octenoyl-CoA + reduced [electron-transfer flavoprotein]. It carries out the reaction decanoyl-CoA + oxidized [electron-transfer flavoprotein] + H(+) = (2E)-decenoyl-CoA + reduced [electron-transfer flavoprotein]. It catalyses the reaction dodecanoyl-CoA + oxidized [electron-transfer flavoprotein] + H(+) = (2E)-dodecenoyl-CoA + reduced [electron-transfer flavoprotein]. The enzyme catalyses tetradecanoyl-CoA + oxidized [electron-transfer flavoprotein] + H(+) = (2E)-tetradecenoyl-CoA + reduced [electron-transfer flavoprotein]. The catalysed reaction is oxidized [electron-transfer flavoprotein] + hexadecanoyl-CoA + H(+) = (2E)-hexadecenoyl-CoA + reduced [electron-transfer flavoprotein]. The protein operates within lipid metabolism; mitochondrial fatty acid beta-oxidation. In terms of biological role, medium-chain specific acyl-CoA dehydrogenase is one of the acyl-CoA dehydrogenases that catalyze the first step of mitochondrial fatty acid beta-oxidation, an aerobic process breaking down fatty acids into acetyl-CoA and allowing the production of energy from fats. The first step of fatty acid beta-oxidation consists in the removal of one hydrogen from C-2 and C-3 of the straight-chain fatty acyl-CoA thioester, resulting in the formation of trans-2-enoyl-CoA. Electron transfer flavoprotein (ETF) is the electron acceptor that transfers electrons to the main mitochondrial respiratory chain via ETF-ubiquinone oxidoreductase (ETF dehydrogenase). Among the different mitochondrial acyl-CoA dehydrogenases, medium-chain specific acyl-CoA dehydrogenase acts specifically on acyl-CoAs with saturated 6 to 12 carbons long primary chains. The polypeptide is Medium-chain specific acyl-CoA dehydrogenase, mitochondrial (Sus scrofa (Pig)).